We begin with the raw amino-acid sequence, 372 residues long: F-box/kelch-repeat protein At2g44630 (372 aa).

A compositionally biased stretch (polar residues) spans 1 to 13 (MSNADEPPQKTNQ). The tract at residues 1 to 21 (MSNADEPPQKTNQPPSSSLTP) is disordered. An F-box domain is found at 21–67 (PPSLFSLPVDIVLNILALVPKRYYPILCCVSKSLRSLIRSPEIHKTR). Kelch repeat units follow at residues 136-181 (EIYC…LVGG) and 183-228 (IYVI…SVSL).

The protein is F-box/kelch-repeat protein At2g44630 of Arabidopsis thaliana (Mouse-ear cress).